Reading from the N-terminus, the 402-residue chain is Phytoene synthase 2, chloroplastic (402 aa).

The transit peptide at 1-54 directs the protein to the chloroplast; the sequence is MAAGSSAVWAAQHPACSGGKFHHLSPSHSHCRPRRALQTPPALPARRSGASPPR. The segment covering 20–35 has biased composition (basic residues); sequence KFHHLSPSHSHCRPRR. Residues 20–54 form a disordered region; the sequence is KFHHLSPSHSHCRPRRALQTPPALPARRSGASPPR. Residues 44–54 are compositionally biased toward low complexity; that stretch reads PARRSGASPPR.

It belongs to the phytoene/squalene synthase family. In terms of tissue distribution, expressed in leaves and endosperm.

It localises to the plastid. It is found in the chloroplast. The protein resides in the plastoglobule. It catalyses the reaction 2 (2E,6E,10E)-geranylgeranyl diphosphate = 15-cis-phytoene + 2 diphosphate. In terms of biological role, catalyzes the conversion of geranylgeranyl diphosphate to phytoene. Mediates the first committed step in carotenoid biosynthesis. The polypeptide is Phytoene synthase 2, chloroplastic (Zea mays (Maize)).